The sequence spans 263 residues: uncharacterized protein (263 aa).

The N-terminal stretch at 1 to 22 (MGYLKRLVLYIVIMVMSVFIIG) is a signal peptide. The N-palmitoyl cysteine moiety is linked to residue C23. C23 carries S-diacylglycerol cysteine lipidation.

It belongs to the staphylococcal tandem lipoprotein family.

The protein localises to the cell membrane. This is an uncharacterized protein from Staphylococcus aureus (strain N315).